The sequence spans 461 residues: Coronin-1A (461 aa).

Ser2 bears the N-acetylserine mark. The residue at position 2 (Ser2) is a Phosphoserine; by PKC. WD repeat units lie at residues 13-63 (HVFG…LVLP), 73-110 (NAPT…MVWE), 123-160 (PVVT…MVWD), 164-204 (GAAM…RIIE), 207-251 (KGTV…ALWD), 258-296 (PLSL…RYFE), and 302-349 (PFLH…EPIA). The span at 403–418 (ELRVNRGLDTGRRRAA) shows a compositional bias: basic and acidic residues. The interval 403 to 432 (ELRVNRGLDTGRRRAAPEASGTPSSDAVSR) is disordered. Thr412 bears the Phosphothreonine; by PKC mark. A Phosphoserine modification is found at Ser422. Positions 424–460 (TPSSDAVSRLEEEMRKLQATVQELQKRLDRLEETVQA) form a coiled coil. Position 449 is an N6-acetyllysine (Lys449).

It belongs to the WD repeat coronin family. In terms of assembly, binds actin. Post-translationally, phosphorylation at Thr-412 by PKC strongly down-regulates the association with actin. In terms of processing, polyubiquitinated by RNF128 with 'Lys-48'-linked chains, leading to proteasomal degradation. As to expression, expressed in brain, thymus, spleen, bone marrow and lymph node. Low in lung and gut.

It is found in the cytoplasm. The protein localises to the cytoskeleton. Its subcellular location is the cell cortex. It localises to the cytoplasmic vesicle. The protein resides in the phagosome membrane. In terms of biological role, may be a crucial component of the cytoskeleton of highly motile cells, functioning both in the invagination of large pieces of plasma membrane, as well as in forming protrusions of the plasma membrane involved in cell locomotion. In mycobacteria-infected cells, its retention on the phagosomal membrane prevents fusion between phagosomes and lysosomes. In Homo sapiens (Human), this protein is Coronin-1A (CORO1A).